Consider the following 309-residue polypeptide: Branched-chain-amino-acid aminotransferase (309 aa).

Lys-160 carries the post-translational modification N6-(pyridoxal phosphate)lysine.

The protein belongs to the class-IV pyridoxal-phosphate-dependent aminotransferase family. As to quaternary structure, homohexamer. Requires pyridoxal 5'-phosphate as cofactor.

It carries out the reaction L-leucine + 2-oxoglutarate = 4-methyl-2-oxopentanoate + L-glutamate. The enzyme catalyses L-isoleucine + 2-oxoglutarate = (S)-3-methyl-2-oxopentanoate + L-glutamate. It catalyses the reaction L-valine + 2-oxoglutarate = 3-methyl-2-oxobutanoate + L-glutamate. It participates in amino-acid biosynthesis; L-isoleucine biosynthesis; L-isoleucine from 2-oxobutanoate: step 4/4. The protein operates within amino-acid biosynthesis; L-leucine biosynthesis; L-leucine from 3-methyl-2-oxobutanoate: step 4/4. Its pathway is amino-acid biosynthesis; L-valine biosynthesis; L-valine from pyruvate: step 4/4. Its function is as follows. Acts on leucine, isoleucine and valine. The polypeptide is Branched-chain-amino-acid aminotransferase (ilvE) (Escherichia coli O157:H7).